We begin with the raw amino-acid sequence, 139 residues long: Envelope glycoprotein N (139 aa).

The Virion surface portion of the chain corresponds to 1 to 100; sequence MACGKTESGD…CHSHFYGLSV (100 aa). The helical transmembrane segment at 101–121 threads the bilayer; the sequence is SSFASIWMMVNAIVFICAFGV. Residues 122–139 lie on the Intravirion side of the membrane; it reads FMRHWCYKAFTSDTAKGY.

This sequence belongs to the herpesviridae glycoprotein N family. In terms of assembly, interacts (via N-terminus) with gM (via N-terminus). The gM-gN heterodimer forms the gCII complex.

It is found in the virion membrane. Its subcellular location is the host membrane. The protein resides in the host Golgi apparatus. It localises to the host trans-Golgi network. Its function is as follows. Envelope glycoprotein necessary for proper maturation of gM and modulation of its membrane fusion activity. Also plays a critical role in virion morphogenesis. This Mus musculus (Mouse) protein is Envelope glycoprotein N.